Consider the following 1235-residue polypeptide: JNK-interacting protein 3 (1235 aa).

The disordered stretch occupies residues 1-22 (MMDNDDALLNNGGPQSGAETVY). An RH1 domain is found at 25–113 (EDNNMVMSEK…VTQYEREKSA (89 aa)). A coiled-coil region spans residues 84–184 (RINQEQDVEL…NKLHERYTEL (101 aa)). The disordered stretch occupies residues 278–325 (GAATDSLQQQHQATSPQSPPDTSPVVPNVPPANVGRSTTKKEQRSDNN). Polar residues predominate over residues 282-293 (DSLQQQHQATSP). Residues 294 to 307 (QSPPDTSPVVPNVP) show a composition bias toward pro residues. Residues 366-493 (GKEVENLIME…AVRLTEILRA (128 aa)) adopt a coiled-coil conformation. The region spanning 456–526 (RKRFTRVEMA…TPSNRPTERI (71 aa)) is the RH2 domain. 3 disordered regions span residues 520-572 (NRPT…MHPA), 813-852 (KPKS…PVNA), and 869-897 (PGAP…STGS). Positions 529–543 (GLGGGPMFRNTGGGS) are enriched in gly residues. Composition is skewed to low complexity over residues 544 to 555 (PAHSHGSPSRGS) and 821 to 830 (NSNSKPQQQQ). The span at 874–897 (RLSSGNSGSDGNQANNNNSSSTGS) shows a compositional bias: polar residues.

The protein belongs to the JIP scaffold family. In terms of assembly, forms homo- and heterooligomeric complexes. Binds the TPR motif-containing C-terminal of kinesin light chain, Klc. Pre-assembled syd scaffolding complexes are then transported as a cargo of kinesin, to the required subcellular location.

Its subcellular location is the cytoplasm. In terms of biological role, the JNK-interacting protein (JIP) group of scaffold proteins selectively mediates JNK-signaling by aggregating specific components of the MAPK cascade to form a functional JNK signaling module. May function as a regulator of vesicle transport, through interactions with the JNK-signaling components and motor proteins. Syd is required for efficient kinesin-I mediated axonal transport. The polypeptide is JNK-interacting protein 3 (Drosophila pseudoobscura pseudoobscura (Fruit fly)).